Reading from the N-terminus, the 391-residue chain is Lipid-A-disaccharide synthase (391 aa).

The protein belongs to the LpxB family.

It catalyses the reaction a lipid X + a UDP-2-N,3-O-bis[(3R)-3-hydroxyacyl]-alpha-D-glucosamine = a lipid A disaccharide + UDP + H(+). The protein operates within bacterial outer membrane biogenesis; LPS lipid A biosynthesis. Condensation of UDP-2,3-diacylglucosamine and 2,3-diacylglucosamine-1-phosphate to form lipid A disaccharide, a precursor of lipid A, a phosphorylated glycolipid that anchors the lipopolysaccharide to the outer membrane of the cell. In Azoarcus sp. (strain BH72), this protein is Lipid-A-disaccharide synthase.